Reading from the N-terminus, the 183-residue chain is uncharacterized protein (183 aa).

The helical transmembrane segment at 7–23 (LFFTALCFGLTGCIAPP) threads the bilayer.

It localises to the membrane. This is an uncharacterized protein from Haemophilus influenzae (strain ATCC 51907 / DSM 11121 / KW20 / Rd).